The primary structure comprises 501 residues: Pyruvate kinase 1 (501 aa).

Arg-50 contacts substrate. Residues Asn-52, Ser-54, Asp-85, and Thr-86 each coordinate K(+). Residue 52 to 55 (NFSH) participates in ATP binding. The ATP site is built by Arg-92 and Lys-178. Glu-243 is a Mg(2+) binding site. The substrate site is built by Gly-266, Asp-267, and Thr-299. Asp-267 is a binding site for Mg(2+).

Belongs to the pyruvate kinase family. Homotetramer. It depends on Mg(2+) as a cofactor. The cofactor is K(+).

It carries out the reaction pyruvate + ATP = phosphoenolpyruvate + ADP + H(+). Its pathway is carbohydrate degradation; glycolysis; pyruvate from D-glyceraldehyde 3-phosphate: step 5/5. In Candida glabrata (strain ATCC 2001 / BCRC 20586 / JCM 3761 / NBRC 0622 / NRRL Y-65 / CBS 138) (Yeast), this protein is Pyruvate kinase 1 (PYK1).